Consider the following 216-residue polypeptide: Protein shisa-5 (216 aa).

A signal peptide spans 1-26 (MAAPAPAPRILVLLLLLLPAPEGAQS). At 27–93 (ELCMISHGRK…SGFDSDPVAR (67 aa)) the chain is on the extracellular side. The chain crosses the membrane as a helical span at residues 94–114 (FGTVIAIGVTLFVIAVVTVIV). Residues 115-216 (CCTCSCCCLY…AYMEPPKAVP (102 aa)) lie on the Cytoplasmic side of the membrane.

This sequence belongs to the shisa family. In terms of assembly, interacts with PDCD6; PDCD6 can stabilize SHISA5.

The protein resides in the endoplasmic reticulum membrane. It localises to the nucleus membrane. In terms of biological role, can induce apoptosis in a caspase-dependent manner and plays a role in p53/TP53-dependent apoptosis. This Bos taurus (Bovine) protein is Protein shisa-5 (SHISA5).